Consider the following 407-residue polypeptide: TOM1-like protein 1 (407 aa).

Position 2 is an N-acetylglycine (G2). The 129-residue stretch at A55–P183 folds into the VHS domain. Positions F228–K315 constitute a GAT domain. Positions K315–F407 are disordered. The residue at position 337 (S337) is a Phosphoserine. Residues S337–V347 are compositionally biased toward basic and acidic residues. Gly residues predominate over residues V353–G364. The segment covering P388 to F407 has biased composition (basic and acidic residues).

Belongs to the TOM1 family. As to expression, ubiquitously expressed.

The protein resides in the membrane. Functionally, might contribute to the loading of the ESCRT machinery. This Arabidopsis thaliana (Mouse-ear cress) protein is TOM1-like protein 1.